Reading from the N-terminus, the 155-residue chain is Interleukin-36 receptor antagonist protein (155 aa).

An intrachain disulfide couples cysteine 8 to cysteine 154.

Belongs to the IL-1 family. Interacts with cargo receptor TMED10; the interaction mediates the translocation from the cytoplasm into the ERGIC (endoplasmic reticulum-Golgi intermediate compartment) and thereby secretion. In terms of tissue distribution, predominantly expressed in skin keratinocytes but not in fibroblasts, endothelial cells or melanocytes. Detected also in the spleen, brain leukocyte and macrophage cell types. Increased in lesional psoriasis skin.

Its subcellular location is the cytoplasm. It is found in the secreted. Functionally, inhibits the activity of interleukin-36 (IL36A,IL36B and IL36G) by binding to receptor IL1RL2 and preventing its association with the coreceptor IL1RAP for signaling. Part of the IL-36 signaling system that is thought to be present in epithelial barriers and to take part in local inflammatory response; similar to the IL-1 system with which it shares the coreceptor. Proposed to play a role in skin inflammation. May be involved in the innate immune response to fungal pathogens, such as Aspergillus fumigatus. May activate an anti-inflammatory signaling pathway by recruiting SIGIRR. The protein is Interleukin-36 receptor antagonist protein of Homo sapiens (Human).